The following is a 289-amino-acid chain: MDDKSMARGRKAFVTGFPIRHSRSPLIHGFWLKELGIDGSYEAVEVKPEDFSSFAASLAANGFAGGNVTIPHKEAAYAAAESLDEAARAIGAVNTLWLENGRLCGGNTDAYGFAANLDASAPGWDKADRALVLGAGGASRAVVHALLSRGVCHVSVVNRTLSRAEELAAHFGARVYAHGWDEAQALVSNAGLIVNTTALGMSGHGEGQDFPIDLTCAPKEAVATDIVYVPLRTAFLNKAEKAGLKTVDGLGMLLHQAVPGFERWFGQRPQVTQALREHILADMAKAGAL.

Residues 22 to 24 (SRS) and Thr-69 each bind shikimate. Lys-73 functions as the Proton acceptor in the catalytic mechanism. Glu-85 contacts NADP(+). Shikimate contacts are provided by Asn-94 and Asp-109. Residues 134–138 (GAGGA), 158–163 (NRTLSR), and Ile-226 each bind NADP(+). Tyr-228 is a shikimate binding site. Gly-249 is an NADP(+) binding site.

It belongs to the shikimate dehydrogenase family. In terms of assembly, homodimer.

The enzyme catalyses shikimate + NADP(+) = 3-dehydroshikimate + NADPH + H(+). Its pathway is metabolic intermediate biosynthesis; chorismate biosynthesis; chorismate from D-erythrose 4-phosphate and phosphoenolpyruvate: step 4/7. Its function is as follows. Involved in the biosynthesis of the chorismate, which leads to the biosynthesis of aromatic amino acids. Catalyzes the reversible NADPH linked reduction of 3-dehydroshikimate (DHSA) to yield shikimate (SA). The protein is Shikimate dehydrogenase (NADP(+)) of Brucella melitensis biotype 2 (strain ATCC 23457).